The chain runs to 924 residues: MITGLLKKVFGSRNERLIKQYRRTVEQINALEPKFEQLSDDQLRGMTETFRQRHAGGESLESLLPEAFAVCREASKRIMKMRHFDVQLIGGMVLNDNKIAEMRTGEGKTLTATLAVYLNAITGKGVHVVTVNDYLAQRDAEWMGRLYNYLGLSVGVNLSQMAHDQKQAAYNADITYGTNNEFGFDYLRDNMVYDPSQRVQRPLNYAIVDEVDSILIDEARTPLIISGQAENHTDLYQRMNGIPRLLERQIGEEKADGTGVEKPGDYYVDEKGHQVYLTEAGHEKAEEILAQQGLIGEGESLYAPQNITLMHHLYAALRAHSLFHRDQHYVVQNDEVVIVDEFTGRLMTGRRWSDGLHQAVEAKEGVSIQQENQTLATITFQNYFRMYTKLAGMTGTADTEAYEFQEIYGLEVVVIPTNRAAQRKDLQDQIYKTSKERYDAVVRDIRDCYDRGQPVLVGTTSIETSEYLSDLLNKEKLPHQVLNAKQHEREAEIVAQAGRPKMITIATNMAGRGTDIVLGGNVEKQAGFVEIDPNLSDADKAARIQQLKDEWQSLHEQVKSFGGLHIVGTERHESRRIDNQLRGRAGRQGDPGSSRFYLSLDDQLLRIFAGDRVRAIMERLKMPEGEPIEAGIVTRSIESAQRKVEGRNFDIRKQLLQYDDVANDQRKEIYKLRNDVLEANDVGEMVKNLRESVLIELFREHVAADTMEEQWDIAGLETRLREDWGLELPLAKTIEGAQSIEDEALLDMILKAAEERYEGKVAMVGRESFAGFERSVMLQSIDSHWREHLAALDHLRQGIHLRGYAQKDPKQEYKRESFELFARLLDVIKNEVTRVTFNVQIQSPEELEQASEQIEEGLSHLENVQYKHDEFAEGREPVEDAPSLRTGAAVAAEMAVAGMPKVGRNDPCPCGSGKKFKQCHGKLS.

ATP contacts are provided by residues glutamine 87, 105 to 109 (GEGKT), and aspartate 515. 4 residues coordinate Zn(2+): cysteine 908, cysteine 910, cysteine 919, and histidine 920.

This sequence belongs to the SecA family. As to quaternary structure, monomer and homodimer. Part of the essential Sec protein translocation apparatus which comprises SecA, SecYEG and auxiliary proteins SecDF-YajC and YidC. Zn(2+) serves as cofactor.

The protein localises to the cell inner membrane. It localises to the cytoplasm. It catalyses the reaction ATP + H2O + cellular proteinSide 1 = ADP + phosphate + cellular proteinSide 2.. In terms of biological role, part of the Sec protein translocase complex. Interacts with the SecYEG preprotein conducting channel. Has a central role in coupling the hydrolysis of ATP to the transfer of proteins into and across the cell membrane, serving both as a receptor for the preprotein-SecB complex and as an ATP-driven molecular motor driving the stepwise translocation of polypeptide chains across the membrane. This is Protein translocase subunit SecA from Cupriavidus pinatubonensis (strain JMP 134 / LMG 1197) (Cupriavidus necator (strain JMP 134)).